The following is a 361-amino-acid chain: Methionine import ATP-binding protein MetN (361 aa).

Positions 22 to 257 (VRLIDVKRRF…PQTDITRSLL (236 aa)) constitute an ABC transporter domain. 54–61 (GRSGAGKS) is a binding site for ATP.

This sequence belongs to the ABC transporter superfamily. Methionine importer (TC 3.A.1.24) family. In terms of assembly, the complex is composed of two ATP-binding proteins (MetN), two transmembrane proteins (MetI) and a solute-binding protein (MetQ).

It localises to the cell inner membrane. The enzyme catalyses L-methionine(out) + ATP + H2O = L-methionine(in) + ADP + phosphate + H(+). The catalysed reaction is D-methionine(out) + ATP + H2O = D-methionine(in) + ADP + phosphate + H(+). Functionally, part of the ABC transporter complex MetNIQ involved in methionine import. Responsible for energy coupling to the transport system. The protein is Methionine import ATP-binding protein MetN of Rhizobium etli (strain ATCC 51251 / DSM 11541 / JCM 21823 / NBRC 15573 / CFN 42).